A 391-amino-acid polypeptide reads, in one-letter code: GTPase Obg (391 aa).

One can recognise an Obg domain in the interval 1-159 (MKFIDEALIR…RDLLLELMLL (159 aa)). Residues 160 to 333 (ADVGMLGLPN…LTRDIMDFIE (174 aa)) form the OBG-type G domain. Residues 166 to 173 (GLPNAGKS), 191 to 195 (FTTLV), 213 to 216 (DIPG), 283 to 286 (NKID), and 314 to 316 (SAA) contribute to the GTP site. Mg(2+) contacts are provided by S173 and T193.

It belongs to the TRAFAC class OBG-HflX-like GTPase superfamily. OBG GTPase family. As to quaternary structure, monomer. The cofactor is Mg(2+).

It localises to the cytoplasm. Functionally, an essential GTPase which binds GTP, GDP and possibly (p)ppGpp with moderate affinity, with high nucleotide exchange rates and a fairly low GTP hydrolysis rate. Plays a role in control of the cell cycle, stress response, ribosome biogenesis and in those bacteria that undergo differentiation, in morphogenesis control. In Actinobacillus pleuropneumoniae serotype 7 (strain AP76), this protein is GTPase Obg.